The primary structure comprises 273 residues: Epidermal growth factor-like protein 7 (273 aa).

Positions 1 to 23 (MRGSQEVLLMWLLVLAVGGTEHA) are cleaved as a signal peptide. In terms of domain architecture, EMI spans 27–104 (GRRVCAVRAH…TSGLPGACGA (78 aa)). 9 cysteine pairs are disulfide-bonded: cysteine 31-cysteine 89, cysteine 56-cysteine 62, cysteine 88-cysteine 102, cysteine 107-cysteine 117, cysteine 111-cysteine 123, cysteine 125-cysteine 134, cysteine 141-cysteine 152, cysteine 148-cysteine 161, and cysteine 163-cysteine 176. An EGF-like 1 domain is found at 103–135 (GAAICQPPCRNGGSCVQPGRCRCPAGWRGDTCQ). A Cell attachment site motif is present at residues 130 to 132 (RGD). The EGF-like 2; calcium-binding domain maps to 137 to 177 (DVDECSARRGGCPQRCVNTAGSYWCQCWEGHSLSADGTLCV). Residues 192–219 (VDSAMKEEVQRLQSRVDLLEEKLQLVLA) adopt a coiled-coil conformation.

Interacts with ITGAV/ITGB3 in an RGD-dependent manner, increasing endothelial cell's motility.

The protein localises to the secreted. It localises to the extracellular space. In terms of biological role, regulates vascular tubulogenesis in vivo. Inhibits platelet-derived growth factor (PDGF)-BB-induced smooth muscle cell migration and promotes endothelial cell adhesion to the extracellular matrix and angiogenesis. In Homo sapiens (Human), this protein is Epidermal growth factor-like protein 7 (EGFL7).